The following is a 247-amino-acid chain: Chymase (247 aa).

The signal sequence occupies residues 1 to 19; sequence MNLHALCLLLLLLGSSTKA. Positions 20 to 21 are cleaved as a propeptide — activation peptide; that stretch reads GE. The 224-residue stretch at 22 to 245 folds into the Peptidase S1 domain; it reads IIGGTECIPH…YRPWINKILR (224 aa). An intrachain disulfide couples Cys51 to Cys67. The active-site Charge relay system is His66. Residue Asn80 is glycosylated (N-linked (GlcNAc...) asparagine). The Charge relay system role is filled by Asp110. Intrachain disulfides connect Cys144–Cys209 and Cys175–Cys188. Ser203 acts as the Charge relay system in catalysis.

This sequence belongs to the peptidase S1 family. Granzyme subfamily. Mast cells.

The protein localises to the secreted. The protein resides in the cytoplasmic granule. It catalyses the reaction Preferential cleavage: Phe-|-Xaa &gt; Tyr-|-Xaa &gt; Trp-|-Xaa &gt; Leu-|-Xaa.. In terms of biological role, major secreted protease of mast cells with suspected roles in vasoactive peptide generation, extracellular matrix degradation, and regulation of gland secretion. The sequence is that of Chymase (Cma1) from Rattus norvegicus (Rat).